The primary structure comprises 282 residues: Probable endonuclease 4 (282 aa).

His66, His106, Glu143, Asp177, His180, His214, Asp227, His229, and Glu259 together coordinate Zn(2+).

Belongs to the AP endonuclease 2 family. It depends on Zn(2+) as a cofactor.

It carries out the reaction Endonucleolytic cleavage to 5'-phosphooligonucleotide end-products.. In terms of biological role, endonuclease IV plays a role in DNA repair. It cleaves phosphodiester bonds at apurinic or apyrimidinic (AP) sites, generating a 3'-hydroxyl group and a 5'-terminal sugar phosphate. This chain is Probable endonuclease 4, found in Nitratidesulfovibrio vulgaris (strain ATCC 29579 / DSM 644 / CCUG 34227 / NCIMB 8303 / VKM B-1760 / Hildenborough) (Desulfovibrio vulgaris).